The primary structure comprises 2185 residues: MGAQVSTQKTGAHETSLSAAGNSVIHYTNINYYKDAASNSANRQDFTQDPGKFTEPVKDIMVKSMPALNSPSAEECGYSDRVRSITLGNSTITTQECANVVVGYGVWPTYLKDEEATAEDQPTQPDVATCRFYTLESVMWQQSSPGWWWKFPDALSNMGLFGQNMQYHYLGRAGYTIHVQCNASKFHQGCLLVVCVPEAEMGCATLANKPDPKSLSKGEIANMFESQNSTGETAVQANVINAGMGVGVGNLTIFPHQWINLRTNNSATIVMPYINSVPMDNMFRHNNFTLMVIPFAPLSYSTGATTYVPITVTVAPMCAEYNGLRLAGKQGLPTLSTPGSNQFLTSDDFQSPSAMPQFDVTPEMDIPGQVNNLMEIAEVDSVVPVNNTEGKVMSIEAYQIPVQSNPTNGSQVFGFPLTPGANSVLNRTLLGEILNYYAHWSGSIKLTFMFCGSAMATGKFLLAYSPPGAGAPTTRKEAMLGTHVIWDVGLQSSCVLCIPWISQTHYRYVVMDEYTAGGYITCWYQTNIVVPADAQSDCKILCFASACNDFSVRMLKDTPFIKQDNFFQGPPGEVVERAIARVADTIGSGPVNSESIPALTAAETGHTSQVVPSDTMQTRHVKNYHSRSESTVENFLCRSACVFYTTYKNHDSDGDNFAYWVINTRQVAQLRRKLEMFTYARFDLELTFVITSTQEQPTVRGQDTPVLTHQIMYVPPGGPVPTKVNSYSWQTSTNPSVFWTEGSAPPRMSIPFIGIGNAYSMFYDGWARFDKQGTYGTSTLNNMGTLYMRHVNDGGPGPIVSTVRIYFKPKHVKTWVPRPPRLCQYQKAGNVNFEPTGVTEGRTDITTMKTTGAFGQQSGAVYVGNYRVVNIHLATRADWQNCVWEDYDRDLLVSTTTAHGCDTIARCDCTAGVYFCASRNKHYPVTFEGPGLVEVQESEYYPKKHQSHVLLAAGFAEPGDCGGILRCQHGVIGIVTMGGEGVVGFADVRDLLWLEDDAMEQGVRDYVEQLGNAFGSGFTNQICEQVTLLKESLIGQDSILEKSLKALVKIVSALVIVVRNHDDLITVTATLALIGCTTSPWRWLKQKVSQYYGIPMAERQNSGWLKKFTEMTNACKGMEWIAIKIQKFIEWLKVKILPEVKEKHEFLNRLKQLPLLESQIATIEQSAPSQSDQEQLFSNVQYFAHYCRKYAPLYAAEAKRVFSLEKKMSNYIQFKSKCRIEPVCLLLHGSPGAGKSVATNLIGRSLAEKLNSSVYSLPPDPDHFDGYKQQAVVIMDDLCQNPDGKDVSLFCQMVSSVDFVPPMAALEEKGILFTSPFVLASTNAGSVNAPTVSDSRALVRRFHFDMNIEVVSMYSQNGKINMPMAVKTCDEECCPVNFKKCCPLVCGKAIQFIDRRTQVRYSLDMLVTEMFREYNHRHSVGATLEALFQGPPVYREIKISVAPETPPPPAVADLLKSVDSEAVREYCKEKGWLIPEVDSTLQIEKHVNRAFICLQALTTFVSVAGIIYIIYKLFAGFQGAYTGMPNQKPKVPTLRQAKVQGPAFEFAVAMMKRNASTVKTEYGEFTMLGIYDRWAVLPRHAKPGPTILMNDQVVGVLDAKELVDKDGTNLELTLLKLNRNEKFRDIRGFLAREEVEANEAVLAINTSKFPNMYIPVGRVTDYGFLNLGGTPTKRMLMYNFPTRAGQCGGVLMSTGKVLGIHVGGNGHQGFSAALLRHYFNEEQGEIEFVESSKDAGFPVINTPSKTKLEPSVFHHVFEGNKEPAVLRNGDPRLKANFEEAIFSKYIGNVNTHVDEYMMEAVDYYAGQLATLDISTEPMKLEDAVYGTEGLEALDLTTSAGYPYVALGIKKRDILSKKTRDLTKLKECMDKYGLNLPMVTYVKDELRSADKVAKGKSRLIEASSLNDSVAMRQTFGNLYKTFHLNPGIVTGSAVGCDPDVFWSKIPVMLDGHLIAFDYSGYDASLSPVWFTCLKLLLEKLGYTNKETNYIDYLCNSHHLYRDKHYFVRGGMPSGCSGTSIFNSMINNIIIRTLMLKVYKGIDLDQFRMIAYGDDVIASYPWPIDASLLAEAGKGYGLIMTPADKGECFNEVTWTNVTFLKRYFRADEQYPFLVHPVMPMKDIHESIRWTKDPKNTQDHVRSLCLLAWHNGEHEYEEFIRKIRSVPVGRCLSLPAFSTLRRKWLDSF.

A lipid anchor (N-myristoyl glycine; by host) is attached at Gly-2. The Cytoplasmic portion of the chain corresponds to 2-1495; the sequence is GAQVSTQKTG…HVNRAFICLQ (1494 aa). Positions 566 to 582 are amphipathic alpha-helix; sequence FFQGPPGEVVERAIARV. Catalysis depends on for protease 2A activity residues His-872 and Asp-890. Cys-907 and Cys-909 together coordinate Zn(2+). Cys-961 (for protease 2A activity) is an active-site residue. Positions 967 and 969 each coordinate Zn(2+). The segment at 1101 to 1173 is membrane-binding; sequence NSGWLKKFTE…EQSAPSQSDQ (73 aa). The oligomerization stretch occupies residues 1101–1239; it reads NSGWLKKFTE…SPGAGKSVAT (139 aa). Positions 1122-1126 are RNA-binding; that stretch reads AIKIQ. An SF3 helicase domain is found at 1205–1361; it reads EKKMSNYIQF…SMYSQNGKIN (157 aa). Zn(2+) contacts are provided by Cys-1369, Cys-1381, and Cys-1386. Residues 1369–1386 form a C4-type; degenerate zinc finger; sequence CDEECCPVNFKKCCPLVC. The segment at 1413 to 1420 is RNA-binding; that stretch reads EYNHRHSV. The segment at 1424–1429 is oligomerization; sequence LEALFQ. An intramembrane segment occupies 1496-1511; the sequence is ALTTFVSVAGIIYIIY. At 1512 to 2185 the chain is on the cytoplasmic side; that stretch reads KLFAGFQGAY…TLRRKWLDSF (674 aa). Tyr-1521 carries the post-translational modification O-(5'-phospho-RNA)-tyrosine. Residues 1541 to 1719 enclose the Peptidase C3 domain; the sequence is GPAFEFAVAM…FSAALLRHYF (179 aa). Active-site for protease 3C activity residues include His-1580, Glu-1611, and Cys-1687. In terms of domain architecture, RdRp catalytic spans 1950–2066; it reads GHLIAFDYSG…SYPWPIDASL (117 aa). Positions 1956 and 2052 each coordinate Mg(2+).

The protein belongs to the picornaviruses polyprotein family. Interacts with capsid protein VP1 and capsid protein VP3 to form heterotrimeric protomers. As to quaternary structure, interacts with capsid protein VP0, and capsid protein VP3 to form heterotrimeric protomers. Five protomers subsequently associate to form pentamers which serve as building blocks for the capsid. Interacts with capsid protein VP2, capsid protein VP3 and capsid protein VP4 following cleavage of capsid protein VP0. In terms of assembly, interacts with capsid protein VP1 and capsid protein VP3 in the mature capsid. Interacts with capsid protein VP0 and capsid protein VP1 to form heterotrimeric protomers. Five protomers subsequently associate to form pentamers which serve as building blocks for the capsid. Interacts with capsid protein VP4 in the mature capsid. Interacts with protein 2C; this interaction may be important for virion morphogenesis. As to quaternary structure, interacts with capsid protein VP1 and capsid protein VP3. In terms of assembly, homodimer. Homohexamer; forms a hexameric ring structure with 6-fold symmetry characteristic of AAA+ ATPases. Interacts (via N-terminus) with host RTN3 (via reticulon domain); this interaction is important for viral replication. Interacts with capsid protein VP3; this interaction may be important for virion morphogenesis. As to quaternary structure, interacts with protein 3CD. In terms of assembly, homodimer. Interacts with host GBF1. Interacts (via GOLD domain) with host ACBD3 (via GOLD domain); this interaction allows the formation of a viral protein 3A/ACBD3 heterotetramer with a 2:2 stoichiometry, which will stimulate the recruitment of host PI4KB in order to synthesize PI4P at the viral RNA replication sites. Interacts with RNA-directed RNA polymerase. As to quaternary structure, interacts with protein 3AB and with RNA-directed RNA polymerase. In terms of assembly, interacts with Viral protein genome-linked and with protein 3CD. The cofactor is Mg(2+). In terms of processing, specific enzymatic cleavages in vivo by the viral proteases yield processing intermediates and the mature proteins. Post-translationally, myristoylation is required for the formation of pentamers during virus assembly. Further assembly of 12 pentamers and a molecule of genomic RNA generates the provirion. During virion maturation, immature virions are rendered infectious following cleavage of VP0 into VP4 and VP2. This maturation seems to be an autocatalytic event triggered by the presence of RNA in the capsid and it is followed by a conformational change infectious virion. In terms of processing, myristoylation is required during RNA encapsidation and formation of the mature virus particle. Post-translationally, VPg is uridylylated by the polymerase into VPg-pUpU. This acts as a nucleotide-peptide primer for the genomic RNA replication.

Its subcellular location is the virion. It is found in the host cytoplasm. The protein resides in the host cytoplasmic vesicle membrane. The protein localises to the host nucleus. The enzyme catalyses a ribonucleoside 5'-triphosphate + H2O = a ribonucleoside 5'-diphosphate + phosphate + H(+). It carries out the reaction Selective cleavage of Tyr-|-Gly bond in the picornavirus polyprotein.. The catalysed reaction is RNA(n) + a ribonucleoside 5'-triphosphate = RNA(n+1) + diphosphate. It catalyses the reaction Selective cleavage of Gln-|-Gly bond in the poliovirus polyprotein. In other picornavirus reactions Glu may be substituted for Gln, and Ser or Thr for Gly.. With respect to regulation, replication or transcription is subject to high level of random mutations by the nucleotide analog ribavirin. Its function is as follows. Forms an icosahedral capsid of pseudo T=3 symmetry with capsid proteins VP2 and VP3. The capsid is 300 Angstroms in diameter, composed of 60 copies of each capsid protein and enclosing the viral positive strand RNA genome. Capsid protein VP1 mainly forms the vertices of the capsid. Capsid protein VP1 interacts with host cell receptor to provide virion attachment to target host cells. This attachment induces virion internalization. Tyrosine kinases are probably involved in the entry process. After binding to its receptor, the capsid undergoes conformational changes. Capsid protein VP1 N-terminus (that contains an amphipathic alpha-helix) and capsid protein VP4 are externalized. Together, they shape a pore in the host membrane through which viral genome is translocated to host cell cytoplasm. Functionally, forms an icosahedral capsid of pseudo T=3 symmetry with capsid proteins VP2 and VP3. The capsid is 300 Angstroms in diameter, composed of 60 copies of each capsid protein and enclosing the viral positive strand RNA genome. Lies on the inner surface of the capsid shell. After binding to the host receptor, the capsid undergoes conformational changes. Capsid protein VP4 is released, Capsid protein VP1 N-terminus is externalized, and together, they shape a pore in the host membrane through which the viral genome is translocated into the host cell cytoplasm. In terms of biological role, component of immature procapsids, which is cleaved into capsid proteins VP4 and VP2 after maturation. Allows the capsid to remain inactive before the maturation step. Its function is as follows. Cysteine protease that cleaves viral polyprotein and specific host proteins. It is responsible for the autocatalytic cleavage between the P1 and P2 regions, which is the first cleavage occurring in the polyprotein. Also cleaves the host translation initiation factor EIF4G1, in order to shut down the capped cellular mRNA translation. Inhibits the host nucleus-cytoplasm protein and RNA trafficking by cleaving host members of the nuclear pores. Counteracts stress granule formation probably by antagonizing its assembly or promoting its dissassembly. Functionally, plays an essential role in the virus replication cycle by acting as a viroporin. Creates a pore in the host endoplasmic reticulum and as a consequence releases Ca2+ in the cytoplasm of infected cell. In turn, high levels of cytoplasmic calcium may trigger membrane trafficking and transport of viral ER-associated proteins to viroplasms, sites of viral genome replication. Induces and associates with structural rearrangements of intracellular membranes. Displays RNA-binding, nucleotide binding and NTPase activities. May play a role in virion morphogenesis and viral RNA encapsidation by interacting with the capsid protein VP3. In terms of biological role, localizes the viral replication complex to the surface of membranous vesicles. Together with protein 3CD binds the Cis-Active RNA Element (CRE) which is involved in RNA synthesis initiation. Acts as a cofactor to stimulate the activity of 3D polymerase, maybe through a nucleid acid chaperone activity. Its function is as follows. Localizes the viral replication complex to the surface of membranous vesicles. It inhibits host cell endoplasmic reticulum-to-Golgi apparatus transport and causes the disassembly of the Golgi complex, possibly through GBF1 interaction. This would result in depletion of MHC, trail receptors and IFN receptors at the host cell surface. Plays an essential role in viral RNA replication by recruiting ACBD3 and PI4KB at the viral replication sites, thereby allowing the formation of the rearranged membranous structures where viral replication takes place. Functionally, acts as a primer for viral RNA replication and remains covalently bound to viral genomic RNA. VPg is uridylylated prior to priming replication into VPg-pUpU. The oriI viral genomic sequence may act as a template for this. The VPg-pUpU is then used as primer on the genomic RNA poly(A) by the RNA-dependent RNA polymerase to replicate the viral genome. During genome replication, the VPg-RNA linkage is removed by the host TDP2, thereby accelerating replication. During the late stage of the replication cycle, host TDP2 is excluded from sites of viral RNA synthesis and encapsidation, allowing for the generation of progeny virions. Involved in the viral replication complex and viral polypeptide maturation. It exhibits protease activity with a specificity and catalytic efficiency that is different from protease 3C. Protein 3CD lacks polymerase activity. Protein 3CD binds to the 5'UTR of the viral genome. In terms of biological role, major viral protease that mediates proteolytic processing of the polyprotein. Cleaves host EIF5B, contributing to host translation shutoff. Also cleaves host PABPC1, contributing to host translation shutoff. Cleaves host NLRP1, triggers host N-glycine-mediated degradation of the autoinhibitory NLRP1 N-terminal fragment. Its function is as follows. Replicates the viral genomic RNA on the surface of intracellular membranes. May form linear arrays of subunits that propagate along a strong head-to-tail interaction called interface-I. Covalently attaches UMP to a tyrosine of VPg, which is used to prime RNA synthesis. The positive stranded RNA genome is first replicated at virus induced membranous vesicles, creating a dsRNA genomic replication form. This dsRNA is then used as template to synthesize positive stranded RNA genomes. ss(+)RNA genomes are either translated, replicated or encapsidated. This is Genome polyprotein from Swine vesicular disease virus (strain H/3 '76) (SVDV).